A 245-amino-acid chain; its full sequence is Bis(5'-nucleosyl)-tetraphosphatase PrpE [asymmetrical] (245 aa).

It belongs to the PrpE family. It depends on Ni(2+) as a cofactor.

The catalysed reaction is P(1),P(4)-bis(5'-guanosyl) tetraphosphate + H2O = GMP + GTP + 2 H(+). Its function is as follows. Asymmetrically hydrolyzes Ap4p to yield AMP and ATP. The polypeptide is Bis(5'-nucleosyl)-tetraphosphatase PrpE [asymmetrical] (Anoxybacillus flavithermus (strain DSM 21510 / WK1)).